The primary structure comprises 450 residues: Glucose-6-phosphate isomerase (450 aa).

E290 (proton donor) is an active-site residue. Catalysis depends on residues H311 and K425.

It belongs to the GPI family.

The protein resides in the cytoplasm. It carries out the reaction alpha-D-glucose 6-phosphate = beta-D-fructose 6-phosphate. Its pathway is carbohydrate biosynthesis; gluconeogenesis. It functions in the pathway carbohydrate degradation; glycolysis; D-glyceraldehyde 3-phosphate and glycerone phosphate from D-glucose: step 2/4. In terms of biological role, catalyzes the reversible isomerization of glucose-6-phosphate to fructose-6-phosphate. The polypeptide is Glucose-6-phosphate isomerase (Limosilactobacillus fermentum (Lactobacillus fermentum)).